The primary structure comprises 330 residues: Serpentine receptor class J-38 (330 aa).

The next 7 membrane-spanning stretches (helical) occupy residues 6 to 26, 43 to 63, 98 to 118, 135 to 155, 200 to 220, 253 to 273, and 285 to 305; these read IYIF…PIFV, LLLF…VVPI, LVAS…LVIY, LLLS…LGYA, TIIW…LALL, IPIV…IFGI, and GALG…LPIF.

This sequence belongs to the nematode receptor-like protein srj family.

It is found in the membrane. This is Serpentine receptor class J-38 (srj-38) from Caenorhabditis elegans.